Consider the following 358-residue polypeptide: Acyl-CoA Delta-12 desaturase (358 aa).

The next 2 helical transmembrane spans lie at 30-50 and 55-75; these read IILY…AMFY and TVFY…AGSH. Residues His-75, His-80, His-112, His-115, and His-116 each contribute to the Fe cation site. A Histidine box-1 motif is present at residues 75-80; the sequence is HRLWAH. The Histidine box-2 motif lies at 112–116; it reads HRVHH. The next 2 helical transmembrane spans lie at 175–195 and 200–220; these read TFFA…YFWG and TAFF…TFLV. Fe cation contacts are provided by His-225, His-254, His-257, and His-258. Residues 254-258 carry the Histidine box-3 motif; it reads HNYHH.

The protein belongs to the fatty acid desaturase type 1 family. Fe(2+) is required as a cofactor.

The protein localises to the membrane. The enzyme catalyses (9Z)-octadecenoyl-CoA + 2 Fe(II)-[cytochrome b5] + O2 + 2 H(+) = (9Z,12Z)-octadecadienoyl-CoA + 2 Fe(III)-[cytochrome b5] + 2 H2O. It carries out the reaction (9Z)-hexadecenoyl-CoA + 2 Fe(II)-[cytochrome b5] + O2 + 2 H(+) = (9Z,12Z)-hexadecadienoyl-CoA + 2 Fe(III)-[cytochrome b5] + 2 H2O. In terms of biological role, catalyzes the formation of a Delta12 double bond, acting on monounsaturated fatty acyl substrates like palmitoleoyl-CoA ((9Z)-hexadecenoyl-CoA) and oleoyl-CoA ((9Z)-octadecenoyl-CoA) with higher desaturation activity on (9Z)-octadecenoyl-CoA than (9Z)-hexadecenoyl-CoA. Requires preexisting cis double bond at the Delta9 position of fatty acyls to be able to insert the Delta12 double bond. Delta12-desaturation of (9Z)-octadecenoyl-CoA in insects produces (9Z,12Z)-octadecadienoyl-CoA (linoleoyl-CoA) which may be used to supply precursors of crucial mediators of immunity and reproduction and other essential functions. In Tribolium castaneum (Red flour beetle), this protein is Acyl-CoA Delta-12 desaturase.